The sequence spans 723 residues: Nuclear intron maturase 3, mitochondrial (723 aa).

The N-terminal 26 residues, 1 to 26 (MVLRLRVHSFYNRGISFLVSSSLRNL), are a transit peptide targeting the mitochondrion. Residues 532 to 597 (VSAPEELVRK…HYTKDLRVSD (66 aa)) form an intron maturase type-2; degenerate region. Residues 646-700 (CAASFCERSDTIMHRVHLLQNRLHINPLDEEKWVPGMGTIHSALNRKCLPLCSTH) form a THAP-type zinc finger.

Belongs to the plant nuclear intron maturase (nMat) family.

The protein resides in the mitochondrion. Functionally, nuclear-encoded maturase required for splicing of group-II introns in mitochondria. Necessary for mitochondrial biogenesis during early developmental stages. This chain is Nuclear intron maturase 3, mitochondrial, found in Arabidopsis thaliana (Mouse-ear cress).